The chain runs to 125 residues: uncharacterized protein (125 aa).

The next 2 membrane-spanning stretches (helical) occupy residues 22–44 (TPLM…NAAV) and 54–73 (YMGI…SVLM).

The protein belongs to the bacteriophage holin family. Cp-1 holin subfamily.

The protein localises to the cell membrane. This is an uncharacterized protein from Clostridium acetobutylicum (strain ATCC 824 / DSM 792 / JCM 1419 / IAM 19013 / LMG 5710 / NBRC 13948 / NRRL B-527 / VKM B-1787 / 2291 / W).